Consider the following 91-residue polypeptide: Large ribosomal subunit protein bL28 (91 aa).

A disordered region spans residues 1 to 23 (MSRVCELTGKGPMSGNNVSHANN).

Belongs to the bacterial ribosomal protein bL28 family.

The polypeptide is Large ribosomal subunit protein bL28 (Paracoccus denitrificans (strain Pd 1222)).